We begin with the raw amino-acid sequence, 400 residues long: Opsin-3 (400 aa).

Residues 1-38 (MYSGNRSGDQGYWEDGAGAEGAAPAGTRSPAPLFSPTA) lie on the Extracellular side of the membrane. N-linked (GlcNAc...) asparagine glycosylation occurs at Asn-5. The helical transmembrane segment at 39–63 (YERLALLLGCLALLGVGGNLLVLLL) threads the bilayer. The Cytoplasmic segment spans residues 64–75 (YSKFPRLRTPTH). The helical transmembrane segment at 76-100 (LFLVNLSLGDLLVSLFGVTFTFASC) threads the bilayer. At 101–115 (LRNGWVWDAVGCAWD) the chain is on the extracellular side. Cys-112 and Cys-186 are oxidised to a cystine. The chain crosses the membrane as a helical span at residues 116–135 (GFSGSLFGFVSITTLTVLAY). At 136 to 151 (ERYIRVVHARVINFSW) the chain is on the cytoplasmic side. A helical transmembrane segment spans residues 152–175 (AWRAITYIWLYSLAWAGAPLLGWN). At 176–199 (RYILDIHGLGCTVDWRSKDANDSS) the chain is on the extracellular side. Asn-196 is a glycosylation site (N-linked (GlcNAc...) asparagine). Residues 200–227 (FVLFLFLGCLVVPVGIIAHCYGHILYSV) form a helical membrane-spanning segment. The Cytoplasmic segment spans residues 228–253 (RMLRCVEDLQTIQVIKMLRYEKKVAK). The helical transmembrane segment at 254–277 (MCFLMAFVFLTCWMPYIVTRFLVV) threads the bilayer. Over 278-285 (NGYGHLVT) the chain is Extracellular. A helical membrane pass occupies residues 286–310 (PTVSIVSYLFAKSSTVYNPVIYIFM). Residue Lys-297 is modified to N6-(retinylidene)lysine. At 311–400 (NRKFRRSLLQ…KVDVIQVRPL (90 aa)) the chain is on the cytoplasmic side. Cys-323 carries the S-palmitoyl cysteine lipid modification.

The protein belongs to the G-protein coupled receptor 1 family. Opsin subfamily. As to quaternary structure, interacts with MC1R; the interaction results in a decrease in MC1R-mediated cAMP signaling and ultimately a decrease in melanin production in melanocytes. In terms of tissue distribution, expressed in the eye (at protein level). Expressed in tracheal airway smooth muscle. Expressed in brown adipocyte tissue; expression becomes more abundant during differentiation. Strongly expressed in brain. Highly expressed in the preoptic area and paraventricular nucleus of the hypothalamus. Shows highly patterned expression in other regions of the brain, being enriched in selected regions of the cerebral cortex, cerebellar Purkinje cells, a subset of striatal neurons, selected thalamic nuclei, and a subset of interneurons in the ventral horn of the spinal cord.

It is found in the cell membrane. The protein resides in the cytoplasm. Its function is as follows. G-protein coupled receptor which selectively activates G proteins via ultraviolet A (UVA) light-mediated activation in the skin. Binds both 11-cis retinal and all-trans retinal. Regulates melanogenesis in melanocytes via inhibition of alpha-MSH-induced MC1R-mediated cAMP signaling, modulation of calcium flux, regulation of CAMK2 phosphorylation, and subsequently phosphorylation of CREB, p38, ERK and MITF in response to blue light. Plays a role in melanocyte survival through regulation of intracellular calcium levels and subsequent BCL2/RAF1 signaling. Additionally regulates apoptosis via cytochrome c release and subsequent activation of the caspase cascade. Required for TYR and DCT blue light-induced complex formation in melanocytes. Involved in keratinocyte differentiation in response to blue-light. Required for the UVA-mediated induction of calcium and mitogen-activated protein kinase signaling resulting in the expression of MMP1, MMP2, MMP3, MMP9 and TIMP1 in dermal fibroblasts. Plays a role in light-mediated glucose uptake, mitochondrial respiration and fatty acid metabolism in brown adipocyte tissues. May be involved in photorelaxation of airway smooth muscle cells, via blue-light dependent GPCR signaling pathways. This is Opsin-3 (Opn3) from Mus musculus (Mouse).